The following is a 135-amino-acid chain: Large ribosomal subunit protein eL32 (135 aa).

The protein belongs to the eukaryotic ribosomal protein eL32 family.

In Methanococcus vannielii, this protein is Large ribosomal subunit protein eL32 (rpl32e).